Consider the following 470-residue polypeptide: Mitogen-activated protein kinase 15 (470 aa).

Residues 13–306 (FDLQKRLGKG…VEQCLVHPYV (294 aa)) enclose the Protein kinase domain. ATP is bound by residues 19-27 (LGKGAYGIV) and Lys-42. Asp-137 acts as the Proton acceptor in catalysis. Thr-178 is subject to Phosphothreonine. Positions 178 to 180 (TEY) match the TXY motif. At Tyr-180 the chain carries Phosphotyrosine. Residues 362-445 (PYGEDKSRAP…PSSIKQRRRS (84 aa)) form a disordered region. Residues 394-406 (MDKNNSSSHDSSS) are compositionally biased toward low complexity. Basic and acidic residues predominate over residues 409–426 (LRERAASAESRTSKDSNG).

Belongs to the protein kinase superfamily. CMGC Ser/Thr protein kinase family. MAP kinase subfamily. It depends on Mg(2+) as a cofactor. In terms of processing, dually phosphorylated on Thr-178 and Tyr-180, which activates the enzyme. Expressed in the URX neuron and in many other head sensory neurons. Isoform a: Expressed in head and tail ciliated sensory neurons, and in mid-body neurons. Isoform c: Expressed in head and tail ciliated sensory neurons, and in mid-body neurons.

It is found in the cell projection. The protein resides in the cilium. The protein localises to the cilium membrane. It localises to the cytoplasm. Its subcellular location is the cytoskeleton. It is found in the cilium axoneme. The protein resides in the cilium basal body. The protein localises to the cell junction. It localises to the perikaryon. Its subcellular location is the dendrite. It carries out the reaction L-seryl-[protein] + ATP = O-phospho-L-seryl-[protein] + ADP + H(+). The catalysed reaction is L-threonyl-[protein] + ATP = O-phospho-L-threonyl-[protein] + ADP + H(+). Its activity is regulated as follows. Activated by threonine and tyrosine phosphorylation. Functionally, atypical MAPK protein. Regulates primary cilium formation in sensory neurons and the localization of ciliary proteins involved in cilium structure, transport, and signaling. Acts in dopamine (DA) neurons to support synaptic membrane dat-1 availability via activation of rho-1 thereby sustaining normal levels of DA clearance. Plays a role in male mating behavior, probably in part through regulating the localization of the polycystin pkd-2. Functions postembryonically in the URX sensory neurons to constrain URX dendrite growth throughout lifetime, probably by restricting expansion of the subcellular sensory compartment at the dendrite ending. This Caenorhabditis elegans protein is Mitogen-activated protein kinase 15.